The sequence spans 136 residues: MAKHPEVSLYKELTDIQRHVTQNAGTEPPFSGKLLHNKKSGVYHCLCCEQPLFMSGTKFDSGCGWPSFYQPATHDAVQYLDDDSHNMHRIEVRCGHCNAHLGHVFPDGPQPTGERFCINSAALSFTDENTGEKTVG.

Residues 6–128 (EVSLYKELTD…NSAALSFTDE (123 aa)) form the MsrB domain. Zn(2+) is bound by residues Cys45, Cys48, Cys94, and Cys97. The active-site Nucleophile is Cys117.

This sequence belongs to the MsrB Met sulfoxide reductase family. Requires Zn(2+) as cofactor.

The catalysed reaction is L-methionyl-[protein] + [thioredoxin]-disulfide + H2O = L-methionyl-(R)-S-oxide-[protein] + [thioredoxin]-dithiol. This Photorhabdus laumondii subsp. laumondii (strain DSM 15139 / CIP 105565 / TT01) (Photorhabdus luminescens subsp. laumondii) protein is Peptide methionine sulfoxide reductase MsrB.